Reading from the N-terminus, the 181-residue chain is Large ribosomal subunit protein eL18 (181 aa).

Residues 152 to 181 (WGKAPGQRGSHSAPYVRSEGRKFERAHGLK) are disordered. Basic and acidic residues predominate over residues 169–181 (SEGRKFERAHGLK).

Belongs to the eukaryotic ribosomal protein eL18 family.

It localises to the cytoplasm. The polypeptide is Large ribosomal subunit protein eL18 (RPL18) (Tetrahymena thermophila).